Here is a 643-residue protein sequence, read N- to C-terminus: Zinc finger protein 23 (643 aa).

The region spanning 1–43 is the KRAB domain; it reads MLENYGNVASLGFPLLKPAVISQLEGGSELGGSSPLAAGTGLQ. K157 is covalently cross-linked (Glycyl lysine isopeptide (Lys-Gly) (interchain with G-Cter in SUMO2)). The segment at 168–190 adopts a C2H2-type 1; degenerate zinc-finger fold; that stretch reads FKCEELVEPFRCDSQLIQHQENN. 16 C2H2-type zinc fingers span residues 196–218, 224–246, 252–274, 280–302, 308–330, 336–358, 364–386, 392–414, 420–442, 448–470, 476–498, 504–526, 532–554, 560–582, 588–610, and 616–638; these read YQCS…QRLH, FKCV…QTIH, YQCK…QRIH, YQCK…QRVH, YECN…QRIH, YECN…QSIH, YECT…QRIH, YECN…LRIH, FECN…HRIH, FKCM…QRIH, FQCK…QRSH, FRCV…QTVH, and YMCS…QSVH.

The protein belongs to the krueppel C2H2-type zinc-finger protein family.

The protein resides in the nucleus. Functionally, may be involved in transcriptional regulation. May have a role in embryonic development. The sequence is that of Zinc finger protein 23 (ZNF23) from Homo sapiens (Human).